The following is a 138-amino-acid chain: MSGTLLAFDFGTKSIGVAIGQRITGTARPLTAIKAQDGTPDWTLIERLLKEWQPEAVIVGLPLNMDGTEQPLTARARKFANKIHGRFGAVVKLHDERLSTVEARAGLFEHGGFRALNKGSVDSASAVIILESFFEQGF.

It belongs to the YqgF nuclease family.

It localises to the cytoplasm. Could be a nuclease involved in processing of the 5'-end of pre-16S rRNA. This chain is Putative pre-16S rRNA nuclease, found in Enterobacter sp. (strain 638).